Reading from the N-terminus, the 201-residue chain is MQLGLDFNLVEDLVAGVDEVGRGPLCGPVVTAAVILDPSRPILGLNDSKKLSEARREALFEEIREKALAWCVARAEVEEIDRLNILHATMLAMQRAVEGLSVTPRLALIDGNRCPRLAVPSAPVVKGDSQVPAIAAASILAKVSRDREMVELDRLYPGYGMAGHKGYPTAVHLEALSRLGPTPIHRRSFAPVRELLDASVE.

The RNase H type-2 domain maps to 12-201; it reads DLVAGVDEVG…VRELLDASVE (190 aa). Positions 18, 19, and 110 each coordinate a divalent metal cation.

Belongs to the RNase HII family. The cofactor is Mn(2+). Mg(2+) is required as a cofactor.

Its subcellular location is the cytoplasm. The catalysed reaction is Endonucleolytic cleavage to 5'-phosphomonoester.. In terms of biological role, endonuclease that specifically degrades the RNA of RNA-DNA hybrids. This chain is Ribonuclease HII, found in Pseudomonas paraeruginosa (strain DSM 24068 / PA7) (Pseudomonas aeruginosa (strain PA7)).